Reading from the N-terminus, the 325-residue chain is Pyruvate dehydrogenase E1 component subunit beta (325 aa).

Residue E60 participates in thiamine diphosphate binding.

As to quaternary structure, heterodimer of an alpha and a beta chain. Requires thiamine diphosphate as cofactor.

It carries out the reaction N(6)-[(R)-lipoyl]-L-lysyl-[protein] + pyruvate + H(+) = N(6)-[(R)-S(8)-acetyldihydrolipoyl]-L-lysyl-[protein] + CO2. Functionally, the pyruvate dehydrogenase complex catalyzes the overall conversion of pyruvate to acetyl-CoA and CO(2). It contains multiple copies of three enzymatic components: pyruvate dehydrogenase (E1), dihydrolipoamide acetyltransferase (E2) and lipoamide dehydrogenase (E3). The sequence is that of Pyruvate dehydrogenase E1 component subunit beta (pdhB) from Staphylococcus aureus (strain Mu50 / ATCC 700699).